We begin with the raw amino-acid sequence, 312 residues long: Methionyl-tRNA formyltransferase (312 aa).

117 to 120 (SLLP) lines the (6S)-5,6,7,8-tetrahydrofolate pocket.

It belongs to the Fmt family.

The catalysed reaction is L-methionyl-tRNA(fMet) + (6R)-10-formyltetrahydrofolate = N-formyl-L-methionyl-tRNA(fMet) + (6S)-5,6,7,8-tetrahydrofolate + H(+). In terms of biological role, attaches a formyl group to the free amino group of methionyl-tRNA(fMet). The formyl group appears to play a dual role in the initiator identity of N-formylmethionyl-tRNA by promoting its recognition by IF2 and preventing the misappropriation of this tRNA by the elongation apparatus. The sequence is that of Methionyl-tRNA formyltransferase from Bordetella bronchiseptica (strain ATCC BAA-588 / NCTC 13252 / RB50) (Alcaligenes bronchisepticus).